A 2727-amino-acid chain; its full sequence is E3 ubiquitin-protein ligase Ufd4 (2727 aa).

Disordered regions lie at residues 247–271 and 365–389; these read THSSLTAAGTQPTSSSQPAATTNSD and RGSNNPNQGQLAPRPRRNNTNTDRT. The span at 365-374 shows a compositional bias: polar residues; the sequence is RGSNNPNQGQ. ANK repeat units lie at residues 422–451, 453–482, and 486–518; these read VGQTLLNWASAFGTLEMVEYLCEKGADVNK, QRSSSLHYAACFGRPAIAKILLKFGAYPDL, and DGKTPLDKARERLDDGHREVAAILQSPGEWMSP. Positions 682–702 are disordered; sequence AQRSSTSVVVAPRPTSDDPME. The region spanning 1322–1392 is the MIB/HERC2 domain; that stretch reads QIRAQLKHMT…KYDLKLADCE (71 aa). Polar residues-rich tracts occupy residues 1401–1430 and 1437–1448; these read QSMGSASTAAKPSEKGGNTLTSRKSSSTPS and KNQNPEGASNQT. Disordered stretches follow at residues 1401-1448, 1483-1512, 1570-1592, 1845-1871, 1905-1930, and 2092-2115; these read QSMG…SNQT, NTSSSREARAKHKESGTNQMHKDNISGPSP, ESVTASQSSSHPDVQSSSPREND, YPSLSSNNSENIAPSNPSNTSAGQQSA, ALLGDLDDEDDMDEDNDEEENEDEYE, and STCLESEEFPQTPDVSSKSGASTL. Over residues 1575–1592 the composition is skewed to low complexity; the sequence is SQSSSHPDVQSSSPREND. The span at 1909–1930 shows a compositional bias: acidic residues; the sequence is DLDDEDDMDEDNDEEENEDEYE. A compositionally biased stretch (polar residues) spans 2104-2115; sequence PDVSSKSGASTL. The HECT domain maps to 2289–2727; that stretch reads RKSVLEVEFL…ATKEKGFHLN (439 aa). The active-site Glycyl thioester intermediate is the Cys-2696.

This sequence belongs to the UPL family. K-HECT subfamily.

The enzyme catalyses S-ubiquitinyl-[E2 ubiquitin-conjugating enzyme]-L-cysteine + [acceptor protein]-L-lysine = [E2 ubiquitin-conjugating enzyme]-L-cysteine + N(6)-ubiquitinyl-[acceptor protein]-L-lysine.. It functions in the pathway protein modification; protein ubiquitination. In terms of biological role, E3 ubiquitin-protein ligase which accepts ubiquitin from an E2 ubiquitin-conjugating enzyme in the form of a thioester and then directly transfers the ubiquitin to targeted substrates. Involved in the negative regulation of the Ras/MAPK signaling pathway in the wing by acting with the E2 enzyme Unc6 and the putative E3 ligases poe and Kcmf1 to mediate the ubiquitination and proteasomal degradation of rl/MAPK. In Drosophila melanogaster (Fruit fly), this protein is E3 ubiquitin-protein ligase Ufd4.